The sequence spans 342 residues: Deoxyguanosinetriphosphate triphosphohydrolase-like protein (342 aa).

The region spanning 75 to 190 is the HD domain; the sequence is RLVHTLEVSQ…VRFADKIAYV (116 aa).

Belongs to the dGTPase family. Type 2 subfamily.

The chain is Deoxyguanosinetriphosphate triphosphohydrolase-like protein from Clostridium perfringens (strain 13 / Type A).